The sequence spans 129 residues: Glycine cleavage system H protein (129 aa).

In terms of domain architecture, Lipoyl-binding spans 24–106 (LVRIGISAFA…HGEGWLLLVK (83 aa)). Residue Lys65 is modified to N6-lipoyllysine.

It belongs to the GcvH family. As to quaternary structure, the glycine cleavage system is composed of four proteins: P, T, L and H. (R)-lipoate serves as cofactor.

Functionally, the glycine cleavage system catalyzes the degradation of glycine. The H protein shuttles the methylamine group of glycine from the P protein to the T protein. The polypeptide is Glycine cleavage system H protein (Prochlorococcus marinus (strain SARG / CCMP1375 / SS120)).